A 68-amino-acid chain; its full sequence is Large ribosomal subunit protein bL35 (68 aa).

The protein belongs to the bacterial ribosomal protein bL35 family.

This is Large ribosomal subunit protein bL35 from Rickettsia conorii (strain ATCC VR-613 / Malish 7).